Reading from the N-terminus, the 221-residue chain is Agamous-like MADS-box protein AGL14 (221 aa).

The MADS-box domain maps to 3–57 (RGKTEMKRIENATSRQVTFSKRRNGLLKKAFELSVLCDAEVALIIFSPRGKLYEF). In terms of domain architecture, K-box spans 87–177 (SQQSKDETYG…MEKCEMQGRG (91 aa)).

In terms of assembly, interacts with AGL16. In terms of tissue distribution, preferentially expressed in roots. Expressed in lateral root cap, root epidermis, root endodermis, columella of the root meristematic region, the vascular cylinder in differentiated zones of the primary root and in emerged lateral root primordia. Expressed in pollen.

The protein localises to the nucleus. Its function is as follows. Transcriptional activator that regulates root development by controlling meristem size and patterning of the root apical meristem. Regulates auxin transport and gradients in the root meristematic cells via direct regulation of the auxin efflux carrier PIN1 and PIN4 gene expression. Binds specifically to the CArG-box DNA sequences in the promoter regions of PIN1 and PIN4 genes. Involved in the regulation of shoot apical meristem (SAM) cell identities and transitions. Promotes flowering transition and participates in flower meristem maintenance and determinacy. Positively regulates TFL1 and WUS expression. Binds directly to the TFL1 regulatory sequences. The protein is Agamous-like MADS-box protein AGL14 of Arabidopsis thaliana (Mouse-ear cress).